The following is a 128-amino-acid chain: Large ribosomal subunit protein bL17 (128 aa).

Belongs to the bacterial ribosomal protein bL17 family. Part of the 50S ribosomal subunit. Contacts protein L32.

The sequence is that of Large ribosomal subunit protein bL17 from Pseudomonas syringae pv. syringae (strain B728a).